Here is a 267-residue protein sequence, read N- to C-terminus: Coiled-coil domain-containing protein 90B, mitochondrial (267 aa).

A mitochondrion-targeting transit peptide spans 1–47 (MKGSQLYRHLSLQGNRLHLHLFQGKKLQLHPSQGHKGTAHRTWKKGF). Positions 142–175 (LEKSEFATLRAENEKMKIELEHVRQHLLNETNRI) form a coiled coil. Residues 244 to 266 (TVRYMAASVFTCLAIALGFYRLW) traverse the membrane as a helical segment.

It belongs to the CCDC90 family.

It localises to the mitochondrion membrane. This Xenopus tropicalis (Western clawed frog) protein is Coiled-coil domain-containing protein 90B, mitochondrial (ccdc90b).